The primary structure comprises 740 residues: Elongation factor 2 (740 aa).

The tr-type G domain occupies 23–264 (AQIRNAGTLA…MIIEHVPPPN (242 aa)). GTP contacts are provided by residues 32-39 (AHVDHGKT), 98-102 (DTPGH), and 152-155 (NKID). Residue histidine 605 is modified to Diphthamide.

This sequence belongs to the TRAFAC class translation factor GTPase superfamily. Classic translation factor GTPase family. EF-G/EF-2 subfamily.

The protein localises to the cytoplasm. Catalyzes the GTP-dependent ribosomal translocation step during translation elongation. During this step, the ribosome changes from the pre-translocational (PRE) to the post-translocational (POST) state as the newly formed A-site-bound peptidyl-tRNA and P-site-bound deacylated tRNA move to the P and E sites, respectively. Catalyzes the coordinated movement of the two tRNA molecules, the mRNA and conformational changes in the ribosome. The protein is Elongation factor 2 of Pyrobaculum neutrophilum (strain DSM 2338 / JCM 9278 / NBRC 100436 / V24Sta) (Thermoproteus neutrophilus).